The primary structure comprises 74 residues: Peptide Im-4 (74 aa).

The first 22 residues, 1–22 (MKFQYLLAIFMIVLVVTDHCQA), serve as a signal peptide directing secretion. Lys-39 carries the lysine amide; partial modification. Positions 40–74 (GRRRRQLEARYEPQQRNFRKREIDFEKLFANMPDY) are excised as a propeptide.

The protein belongs to the non-disulfide-bridged peptide (NDBP) superfamily. Short antimicrobial peptide (group 4) family. As to expression, expressed by the venom gland.

Its subcellular location is the secreted. The protein localises to the target cell membrane. Its function is as follows. Antimicrobial peptide that probably forms pores in target membranes. Has antibacterial activity against Gram-positive bacteria S.aureus NBRC 13276 (MIC=5-10 uM) and B.subtilis NBRC 3009 (MIC=2.5-5 uM) but not against Gram-negative bacterium E.coli NBRC 3972. This chain is Peptide Im-4, found in Isometrus maculatus (Lesser brown scorpion).